The sequence spans 761 residues: Xaa-Pro dipeptidyl-peptidase (761 aa).

Catalysis depends on charge relay system residues serine 349, aspartate 469, and histidine 499.

Belongs to the peptidase S15 family. As to quaternary structure, homodimer.

The protein localises to the cytoplasm. It carries out the reaction Hydrolyzes Xaa-Pro-|- bonds to release unblocked, N-terminal dipeptides from substrates including Ala-Pro-|-p-nitroanilide and (sequentially) Tyr-Pro-|-Phe-Pro-|-Gly-Pro-|-Ile.. In terms of biological role, removes N-terminal dipeptides sequentially from polypeptides having unsubstituted N-termini provided that the penultimate residue is proline. The protein is Xaa-Pro dipeptidyl-peptidase of Streptococcus equi subsp. equi (strain 4047).